A 761-amino-acid polypeptide reads, in one-letter code: uncharacterized protein (761 aa).

TPR repeat units follow at residues 35–68 (EEGK…SLNS), 69–102 (AQGL…SDVD), 103–136 (DALY…NPNK), 137–170 (VEIL…KPDF), 172–203 (EAEE…KNPN), 204–237 (EEVY…FPHD), 351–384 (LGVL…NPSA), and 419–452 (ASAG…VKEE). Residues 487–761 (KRPIFVLGMP…PKGLVGYTVG (275 aa)) are protein sulfotransferase-like.

The protein in the C-terminal section; belongs to the protein sulfotransferase family.

This is an uncharacterized protein from Aquifex aeolicus (strain VF5).